Consider the following 71-residue polypeptide: Bacteriocin carnobacteriocin-A (71 aa).

Residues Met-1 to Gly-18 constitute a propeptide that is removed on maturation. Cys-40 and Cys-69 are oxidised to a cystine.

It is found in the secreted. Its function is as follows. Has antibacterial activity. This chain is Bacteriocin carnobacteriocin-A (cbnBA), found in Carnobacterium maltaromaticum (Carnobacterium piscicola).